Reading from the N-terminus, the 323-residue chain is Aspartate carbamoyltransferase catalytic subunit (323 aa).

The carbamoyl phosphate site is built by Arg61 and Thr62. Lys89 is a binding site for L-aspartate. Residues Arg111, His144, and Gln147 each coordinate carbamoyl phosphate. Positions 184 and 238 each coordinate L-aspartate. Positions 279 and 280 each coordinate carbamoyl phosphate.

The protein belongs to the aspartate/ornithine carbamoyltransferase superfamily. ATCase family. In terms of assembly, heterododecamer (2C3:3R2) of six catalytic PyrB chains organized as two trimers (C3), and six regulatory PyrI chains organized as three dimers (R2).

The enzyme catalyses carbamoyl phosphate + L-aspartate = N-carbamoyl-L-aspartate + phosphate + H(+). The protein operates within pyrimidine metabolism; UMP biosynthesis via de novo pathway; (S)-dihydroorotate from bicarbonate: step 2/3. Its function is as follows. Catalyzes the condensation of carbamoyl phosphate and aspartate to form carbamoyl aspartate and inorganic phosphate, the committed step in the de novo pyrimidine nucleotide biosynthesis pathway. This chain is Aspartate carbamoyltransferase catalytic subunit, found in Acaryochloris marina (strain MBIC 11017).